Reading from the N-terminus, the 86-residue chain is Myosin light chain alkali (86 aa).

One can recognise an EF-hand domain in the interval 11–46 (GCYEDFIECLKLYDKEENGTMMLAELQHALLALGES).

Myosin is a hexamer of 2 heavy chains and 4 light chains.

The polypeptide is Myosin light chain alkali (Mlc1) (Drosophila subobscura (Fruit fly)).